The chain runs to 84 residues: Large ribosomal subunit protein bL27 (84 aa).

Positions methionine 1–lysine 25 are disordered.

The protein belongs to the bacterial ribosomal protein bL27 family.

This Sulfurovum sp. (strain NBC37-1) protein is Large ribosomal subunit protein bL27.